Here is a 133-residue protein sequence, read N- to C-terminus: Small ribosomal subunit protein eS24 (133 aa).

Met1 bears the N-acetylmethionine mark. Residue Thr9 is modified to Phosphothreonine. Lys37 is covalently cross-linked (Glycyl lysine isopeptide (Lys-Gly) (interchain with G-Cter in SUMO2)). Residues 92–133 (ARHGLYEKKKTSRKQRKERKNRMKKVRGTAKANVGAGKKPKE) form a disordered region. Positions 101–119 (KTSRKQRKERKNRMKKVRG) are enriched in basic residues.

It belongs to the eukaryotic ribosomal protein eS24 family. In terms of assembly, component of the small ribosomal subunit. Part of the small subunit (SSU) processome, composed of more than 70 proteins and the RNA chaperone small nucleolar RNA (snoRNA) U3.

It is found in the cytoplasm. It localises to the nucleus. Its subcellular location is the nucleolus. Functionally, component of the small ribosomal subunit. The ribosome is a large ribonucleoprotein complex responsible for the synthesis of proteins in the cell. Required for processing of pre-rRNA and maturation of 40S ribosomal subunits. Part of the small subunit (SSU) processome, first precursor of the small eukaryotic ribosomal subunit. During the assembly of the SSU processome in the nucleolus, many ribosome biogenesis factors, an RNA chaperone and ribosomal proteins associate with the nascent pre-rRNA and work in concert to generate RNA folding, modifications, rearrangements and cleavage as well as targeted degradation of pre-ribosomal RNA by the RNA exosome. The protein is Small ribosomal subunit protein eS24 (RPS24) of Oryctolagus cuniculus (Rabbit).